The sequence spans 671 residues: Acetyl-coenzyme A synthetase 2 (671 aa).

CoA is bound by residues 207 to 210 and Thr-326; that span reads RGGR. Residues 402–404, 426–431, Asp-517, and Arg-532 each bind ATP; these read GEP and DTYWQT. Ser-540 contacts CoA. Residue Arg-543 coordinates ATP. Arg-603 serves as a coordination point for CoA.

It belongs to the ATP-dependent AMP-binding enzyme family.

The enzyme catalyses acetate + ATP + CoA = acetyl-CoA + AMP + diphosphate. This is Acetyl-coenzyme A synthetase 2 (ACS2) from Candida albicans (strain SC5314 / ATCC MYA-2876) (Yeast).